We begin with the raw amino-acid sequence, 645 residues long: MSDEDNNYDDFMLSDDEGMESIEMEEETDDEDKQNIEINEDNSQDDQDRGAARHKQHEQGTFEKHDRVEDICERIFEQGQALKEDERYKEARDLFLKIYYKEEFSSDESIERLMTWKFKSLIEILRLRALQLYFQKNGAQDLVLQILEDTATMSVFLQRIDFQIDGNIFELLSDTFEVLAPKWERVFLFDIEKVDRENMICKIDFQKNFMDQFQWILRKPGKDCKLQNLQRIIRKKIFIAVVWYQRLTMGNVFTPEISSQIEILVKDNECSSFEENNDLESVSMLLQYYILEYMNTARINNRRLFKKCIDFFEMLISKSLTFSQESGLMVILYTSKIVFILDSDSENDLSFALMRYYDRKEELKNMFLYILKHLEEMGKLRERDITSLFHKFILSGFIFTSMILEAISTDKINPFGFEQVKIALGSPIVNVLEDVYRCFAQLELRQLNASISLIPELSVVLSGIIQDIYYLAQTLKLWRKIARLYSCISISDIISMLQISDDNEMTRDDLLTILMRSIMKNRSVVYFKLDLTSDLVYFGDENKVMLPRCSKEEFRLMISPKDEETTEKARLIDFEYVNDVAIYNNPTRIRTKSSKEFFNTLRKSRETVKLPRVSNQSNEDTFLPSYMKFSNKYLELCKLASNNLE.

Over residues 1-45 (MSDEDNNYDDFMLSDDEGMESIEMEEETDDEDKQNIEINEDNSQD) the composition is skewed to acidic residues. The interval 1–63 (MSDEDNNYDD…HKQHEQGTFE (63 aa)) is disordered. Basic and acidic residues predominate over residues 46–63 (DQDRGAARHKQHEQGTFE). The PCI domain occupies 348–543 (DLSFALMRYY…DLVYFGDENK (196 aa)).

As to quaternary structure, component of a COP9 signalosome-like (CSN) complex, composed of at least RRI1/CSN5, CSN9, RRI2/CSN10, PCI8/CSN11, CSN12 and CSI1. In the complex, it probably interacts directly with CSN12.

The protein resides in the cytoplasm. The protein localises to the nucleus. In terms of biological role, component of the COP9 signalosome (CSN) complex that acts as an regulator of the ubiquitin (Ubl) conjugation pathway by mediating the deneddylation of the cullin subunit of SCF-type E3 ubiquitin-protein ligase complexes. The CSN complex is involved in the regulation of the mating pheromone response. The chain is COP9 signalosome complex subunit 10 (RRI2) from Saccharomyces cerevisiae (strain ATCC 204508 / S288c) (Baker's yeast).